We begin with the raw amino-acid sequence, 663 residues long: Ankyrin repeat and SAM domain-containing protein 3 (663 aa).

The segment at 1-421 (MSELSDEASE…PGSEPQAEKS (421 aa)) is interaction with NEK7. A phosphoserine mark is found at Ser-2 and Ser-5. ANK repeat units follow at residues 34 to 64 (DVPL…DLNK), 68 to 97 (GGWT…SVNV), 101 to 130 (EGQT…ELEM), 134 to 163 (QGWT…NANV), 168 to 197 (YGFT…KVDT), and 201 to 220 (SGAT…IVAL). 3-hydroxyasparagine is present on Asn-96. Phosphoserine is present on residues Ser-201, Ser-225, Ser-243, Ser-244, and Ser-245. Disordered regions lie at residues 242–261 (LSSS…CRKK) and 278–425 (TGLG…PYSG). Thr-318 bears the Phosphothreonine mark. Ser-319 is subject to Phosphoserine. The segment covering 322-337 (NERDVESSSSSSREEP) has biased composition (basic and acidic residues). Ser-366, Ser-369, and Ser-373 each carry phosphoserine. Residues 378-395 (KSSVRKQTRTYLKNKSRH) show a composition bias toward basic residues. Positions 424 to 487 (SGPQDLATLL…TSAIARWHSS (64 aa)) constitute an SAM domain. Residues 500-575 (ADRLEAEMQE…AALVLDQLRA (76 aa)) are a coiled coil. At Ser-540 the chain carries Phosphoserine. 2 disordered regions span residues 585–604 (KQHH…PADS) and 637–663 (AEPG…SDVG). The segment covering 641 to 651 (ETTDAEWEEME) has biased composition (acidic residues). Basic and acidic residues predominate over residues 654-663 (IARRDDSDVG).

Homooligomer. Interacts (via SAM domain) with ANKS6 (via SAM domain). Interacts with BICC1. Interacts with NPHP1. Interacts with NEK8. Interacts with HIF1AN. Interacts with NEK7; this interaction alters the subcellular distribution of NEK7 by preventing its nuclear translocation. In terms of processing, hydroxylated at Asn-96, most probably by HIF1AN. Phosphorylations at Ser-5, Ser-225, Thr-318, Ser-319, Ser-366 and Ser-369 occur in a NEK7-dependent manner. Post-translationally, polyubiquitinated.

The protein localises to the cell projection. It localises to the cilium. The protein resides in the cytoplasm. Its function is as follows. May be involved in vasopressin signaling in the kidney. This chain is Ankyrin repeat and SAM domain-containing protein 3 (Anks3), found in Rattus norvegicus (Rat).